The following is a 124-amino-acid chain: Seripauperin-17 (124 aa).

The first 20 residues, 1–20 (MVKLTSIAAGVAAIAAGVAA), serve as a signal peptide directing secretion.

This sequence belongs to the SRP1/TIP1 family. Seripauperin subfamily.

This is Seripauperin-17 (PAU17) from Saccharomyces cerevisiae (strain ATCC 204508 / S288c) (Baker's yeast).